Consider the following 188-residue polypeptide: Adenine phosphoribosyltransferase (188 aa).

Belongs to the purine/pyrimidine phosphoribosyltransferase family. Homodimer.

The protein localises to the cytoplasm. The enzyme catalyses AMP + diphosphate = 5-phospho-alpha-D-ribose 1-diphosphate + adenine. Its pathway is purine metabolism; AMP biosynthesis via salvage pathway; AMP from adenine: step 1/1. Catalyzes a salvage reaction resulting in the formation of AMP, that is energically less costly than de novo synthesis. In Paraburkholderia phytofirmans (strain DSM 17436 / LMG 22146 / PsJN) (Burkholderia phytofirmans), this protein is Adenine phosphoribosyltransferase.